We begin with the raw amino-acid sequence, 597 residues long: Leishmanolysin (597 aa).

An N-terminal signal peptide occupies residues 1 to 39; sequence MSVDSSSTHRHRCVAARLVPLAAAGAAVTVAVGTAAAWA. Residues 40–99 constitute a propeptide, activation peptide; it reads HAGAVQHRCIHDAMQARVRQSVAAQRMAPSAVSAVGLPHVTLDAGNTAAGADPSTGTANV. 2 disulfide bridges follow: Cys-124/Cys-141 and Cys-190/Cys-229. His-263 is a Zn(2+) binding site. Residue Glu-264 is part of the active site. His-267 provides a ligand contact to Zn(2+). An N-linked (GlcNAc...) asparagine glycan is attached at Asn-299. Disulfide bonds link Cys-313–Cys-383, Cys-390–Cys-452, Cys-403–Cys-422, Cys-412–Cys-486, Cys-463–Cys-507, Cys-512–Cys-562, and Cys-532–Cys-555. His-332 is a binding site for Zn(2+). N-linked (GlcNAc...) asparagine glycosylation is present at Asn-404. Asn-574 carries GPI-anchor amidated asparagine lipidation. The propeptide at 575–597 is removed in mature form; the sequence is AAGRRGPRAATALVVAALLAVAL.

Belongs to the peptidase M8 family. It depends on Zn(2+) as a cofactor.

It localises to the cell membrane. The enzyme catalyses Preference for hydrophobic residues at P1 and P1' and basic residues at P2' and P3'. A model nonapeptide is cleaved at -Ala-Tyr-|-Leu-Lys-Lys-.. Its function is as follows. Has an integral role during the infection of macrophages in the mammalian host. The sequence is that of Leishmanolysin (gp63) from Leishmania amazonensis.